Reading from the N-terminus, the 93-residue chain is Small integral membrane protein 41 (93 aa).

Residues 38–58 (VVLGVLSLLVLCGVLFLGGGL) traverse the membrane as a helical segment. Over residues 71–80 (REQRASREPE) the composition is skewed to basic and acidic residues. A disordered region spans residues 71-93 (REQRASREPEPGSASGEDGDDDS).

The protein localises to the membrane. The polypeptide is Small integral membrane protein 41 (Homo sapiens (Human)).